Here is a 610-residue protein sequence, read N- to C-terminus: Probable indole-3-acetic acid-amido synthetase GH3.1 (610 aa).

Belongs to the IAA-amido conjugating enzyme family. As to expression, expressed in flowers.

Its function is as follows. May catalyze the synthesis of indole-3-acetic acid (IAA)-amino acid conjugates, providing a mechanism for the plant to cope with the presence of excess auxin. In Oryza sativa subsp. japonica (Rice), this protein is Probable indole-3-acetic acid-amido synthetase GH3.1 (GH3.1).